The following is an 81-amino-acid chain: Sec-independent protein translocase protein TatA (81 aa).

Residues 1–21 (MGGISIWQLLIVALIVILLFG) form a helical membrane-spanning segment. The tract at residues 34–81 (GAVKGFKNAMTPEDENKSLDDKEKDQTAATSQQAAEKQPETESKDKQA) is disordered. Composition is skewed to basic and acidic residues over residues 47–59 (DENKSLDDKEKDQ) and 70–81 (KQPETESKDKQA).

This sequence belongs to the TatA/E family. The Tat system comprises two distinct complexes: a TatABC complex, containing multiple copies of TatA, TatB and TatC subunits, and a separate TatA complex, containing only TatA subunits. Substrates initially bind to the TatABC complex, which probably triggers association of the separate TatA complex to form the active translocon.

The protein localises to the cell inner membrane. Its function is as follows. Part of the twin-arginine translocation (Tat) system that transports large folded proteins containing a characteristic twin-arginine motif in their signal peptide across membranes. TatA could form the protein-conducting channel of the Tat system. The polypeptide is Sec-independent protein translocase protein TatA (Shewanella frigidimarina (strain NCIMB 400)).